Reading from the N-terminus, the 157-residue chain is uncharacterized protein (157 aa).

The span at 1–11 (MGDLEGQDRPD) shows a compositional bias: basic and acidic residues. A disordered region spans residues 1–22 (MGDLEGQDRPDPISTMVGPSGT).

It is found in the mitochondrion. This is an uncharacterized protein from Arabidopsis thaliana (Mouse-ear cress).